Consider the following 26-residue polypeptide: Conotoxin reg6(gamma) (26 aa).

Residues 1 to 12 (RVLEPGXEDPDV) show a composition bias toward acidic residues. Residues 1–26 (RVLEPGXEDPDVGEPAGEYEHHLLEX) are disordered. Position 4 is a 4-carboxyglutamate (Glu-4). Pro-5 carries the post-translational modification 4-hydroxyproline. Glu-8 is modified (4-carboxyglutamate). Pro-10 carries the 4-hydroxyproline modification. Position 14 is a 4-carboxyglutamate (Glu-14). Pro-15 carries the 4-hydroxyproline modification. 3 positions are modified to 4-carboxyglutamate: Glu-18, Glu-20, and Glu-25.

Expressed by the venom duct.

It localises to the secreted. The chain is Conotoxin reg6(gamma) from Conus regius (Crown cone).